Reading from the N-terminus, the 151-residue chain is Cytochrome c-type biogenesis protein CcmE (151 aa).

Residues 1-9 are Cytoplasmic-facing; that stretch reads MKGLKKKRR. A helical; Signal-anchor for type II membrane protein transmembrane segment spans residues 10–30; it reads IQIITLAFVALAGSTALIGYA. Over 31 to 151 the chain is Periplasmic; that stretch reads MRDGINFFRS…FQHTEDQPQG (121 aa). Residues H123 and Y127 each contribute to the heme site.

Belongs to the CcmE/CycJ family.

Its subcellular location is the cell inner membrane. Heme chaperone required for the biogenesis of c-type cytochromes. Transiently binds heme delivered by CcmC and transfers the heme to apo-cytochromes in a process facilitated by CcmF and CcmH. This Cereibacter sphaeroides (strain ATCC 17025 / ATH 2.4.3) (Rhodobacter sphaeroides) protein is Cytochrome c-type biogenesis protein CcmE.